A 1337-amino-acid polypeptide reads, in one-letter code: ATP-dependent helicase/nuclease subunit A (1337 aa).

In terms of domain architecture, UvrD-like helicase ATP-binding spans 3–484 (FTPSKEQEPA…LDLSDNYRSR (482 aa)). Residue 24–31 (ASAGSGKT) participates in ATP binding. The region spanning 522–867 (ADRDQASPAT…NVMTIHKSKG (346 aa)) is the UvrD-like helicase C-terminal domain.

Belongs to the helicase family. AddA subfamily. In terms of assembly, heterodimer of AddA and AddB/RexB. It depends on Mg(2+) as a cofactor.

The enzyme catalyses Couples ATP hydrolysis with the unwinding of duplex DNA by translocating in the 3'-5' direction.. It catalyses the reaction ATP + H2O = ADP + phosphate + H(+). Functionally, the heterodimer acts as both an ATP-dependent DNA helicase and an ATP-dependent, dual-direction single-stranded exonuclease. Recognizes the chi site generating a DNA molecule suitable for the initiation of homologous recombination. The AddA nuclease domain is required for chi fragment generation; this subunit has the helicase and 3' -&gt; 5' nuclease activities. In Limosilactobacillus fermentum (strain NBRC 3956 / LMG 18251) (Lactobacillus fermentum), this protein is ATP-dependent helicase/nuclease subunit A.